Consider the following 216-residue polypeptide: MATSRTAPTRAPSLRSSPALEASPSRTKASVGALVILAVVALCVYLMDQITKALVVSNLSEGQQVAVLGQLLQLHFVKNPGAAFSIGSGSTWIFSLVGVGVLGFVIWYAPRIRSTAWAILFGLLLGGLLGNLTDRLFREPGFGVGHVIDFLQIPLLTAIFNLADVAIVFSMGLFLLLTLRGIGLDGRRQRDEGAGVSSASPAGDESAADKPENLSA.

The segment at Met1–Glu21 is disordered. A run of 3 helical transmembrane segments spans residues Val31–Thr51, Gly89–Ala109, and Ser114–Asp134. Residues Asp149 and Asp164 contribute to the active site. Residues Ile159–Leu179 traverse the membrane as a helical segment. Residues Gln189 to Ala216 form a disordered region. A compositionally biased stretch (basic and acidic residues) spans Ala207–Ala216.

The protein belongs to the peptidase A8 family.

The protein resides in the cell membrane. It catalyses the reaction Release of signal peptides from bacterial membrane prolipoproteins. Hydrolyzes -Xaa-Yaa-Zaa-|-(S,diacylglyceryl)Cys-, in which Xaa is hydrophobic (preferably Leu), and Yaa (Ala or Ser) and Zaa (Gly or Ala) have small, neutral side chains.. It functions in the pathway protein modification; lipoprotein biosynthesis (signal peptide cleavage). This protein specifically catalyzes the removal of signal peptides from prolipoproteins. The chain is Lipoprotein signal peptidase from Leifsonia xyli subsp. xyli (strain CTCB07).